We begin with the raw amino-acid sequence, 367 residues long: Phosphoribosylaminoimidazole-succinocarboxamide synthase (367 aa).

Belongs to the SAICAR synthetase family.

It catalyses the reaction 5-amino-1-(5-phospho-D-ribosyl)imidazole-4-carboxylate + L-aspartate + ATP = (2S)-2-[5-amino-1-(5-phospho-beta-D-ribosyl)imidazole-4-carboxamido]succinate + ADP + phosphate + 2 H(+). It participates in purine metabolism; IMP biosynthesis via de novo pathway; 5-amino-1-(5-phospho-D-ribosyl)imidazole-4-carboxamide from 5-amino-1-(5-phospho-D-ribosyl)imidazole-4-carboxylate: step 1/2. This is Phosphoribosylaminoimidazole-succinocarboxamide synthase from Colwellia psychrerythraea (strain 34H / ATCC BAA-681) (Vibrio psychroerythus).